The chain runs to 130 residues: Fumarate reductase subunit D (130 aa).

The next 3 membrane-spanning stretches (helical) occupy residues 35-55 (FAMITPITVLVLGILAPLGVI), 67-87 (SFATSIIGALFIIGTLALPMW), and 110-130 (IACYGFATIISALAVVFIFMI).

It belongs to the FrdD family. In terms of assembly, part of an enzyme complex containing four subunits: a flavoprotein (FrdA), an iron-sulfur protein (FrdB), and two hydrophobic anchor proteins (FrdC and FrdD).

The protein resides in the cell inner membrane. Its function is as follows. Anchors the catalytic components of the fumarate reductase complex to the cell membrane, binds quinones. In Vibrio cholerae serotype O1 (strain M66-2), this protein is Fumarate reductase subunit D.